The following is a 545-amino-acid chain: T-complex protein 1 subunit alpha (545 aa).

It belongs to the TCP-1 chaperonin family. In terms of assembly, heterooligomeric complex of about 850 to 900 kDa that forms two stacked rings, 12 to 16 nm in diameter.

It is found in the cytoplasm. In terms of biological role, molecular chaperone; assists the folding of proteins upon ATP hydrolysis. Known to play a role, in vitro, in the folding of actin and tubulin. This is T-complex protein 1 subunit alpha (TCP-1A) from Schistosoma mansoni (Blood fluke).